An 87-amino-acid chain; its full sequence is Large ribosomal subunit protein bL31B (87 aa).

The protein belongs to the bacterial ribosomal protein bL31 family. Type B subfamily. As to quaternary structure, part of the 50S ribosomal subunit.

This chain is Large ribosomal subunit protein bL31B, found in Corynebacterium kroppenstedtii (strain DSM 44385 / JCM 11950 / CIP 105744 / CCUG 35717).